Here is a 160-residue protein sequence, read N- to C-terminus: SsrA-binding protein (160 aa).

It belongs to the SmpB family.

It localises to the cytoplasm. Required for rescue of stalled ribosomes mediated by trans-translation. Binds to transfer-messenger RNA (tmRNA), required for stable association of tmRNA with ribosomes. tmRNA and SmpB together mimic tRNA shape, replacing the anticodon stem-loop with SmpB. tmRNA is encoded by the ssrA gene; the 2 termini fold to resemble tRNA(Ala) and it encodes a 'tag peptide', a short internal open reading frame. During trans-translation Ala-aminoacylated tmRNA acts like a tRNA, entering the A-site of stalled ribosomes, displacing the stalled mRNA. The ribosome then switches to translate the ORF on the tmRNA; the nascent peptide is terminated with the 'tag peptide' encoded by the tmRNA and targeted for degradation. The ribosome is freed to recommence translation, which seems to be the essential function of trans-translation. The chain is SsrA-binding protein from Dinoroseobacter shibae (strain DSM 16493 / NCIMB 14021 / DFL 12).